The sequence spans 415 residues: GPI mannosyltransferase 1 (415 aa).

9 helical membrane passes run 8–28, 82–102, 134–154, 158–178, 222–242, 284–304, 329–349, 354–374, and 387–407; these read PSLV…YGAW, FFSF…WLIA, TRGS…WAVL, ITLA…PFVY, LLLT…MYIL, FESL…PIVL, SQYF…SSLM, LGIT…QQGY, and GLFL…GIII.

It belongs to the PIGM family.

It localises to the endoplasmic reticulum membrane. It functions in the pathway glycolipid biosynthesis; glycosylphosphatidylinositol-anchor biosynthesis. Mannosyltransferase involved in glycosylphosphatidylinositol-anchor biosynthesis. Transfers the first alpha-1,4-mannose to GlcN-acyl-PI during GPI precursor assembly. Required for cell wall integrity. This is GPI mannosyltransferase 1 (gpi14) from Aspergillus oryzae (strain ATCC 42149 / RIB 40) (Yellow koji mold).